We begin with the raw amino-acid sequence, 638 residues long: Bromodomain-containing factor 2 (638 aa).

The span at 1–10 (MSRTNMDTRH) shows a compositional bias: basic and acidic residues. A disordered region spans residues 1–54 (MSRTNMDTRHAHSALLAAPQSATANSRSSNSSSESSSNKNNINVGVGDDSGNVS). The span at 25-43 (NSRSSNSSSESSSNKNNIN) shows a compositional bias: low complexity. In terms of domain architecture, Bromo 1 spans 130–239 (EAEELPPHQS…KYFEKKLSAM (110 aa)). The interval 250–306 (KKTSRNRKKNEDMDSPLVIRRSVSTTNDNIGESGNREGVSGGRPKRTIHPPKSKDLF) is disordered. Serine 264 bears the Phosphoserine mark. Residues 271–281 (SVSTTNDNIGE) are compositionally biased toward polar residues. The 110-residue stretch at 317 to 426 (KTLQKKFRTC…ELFNFHWLEN (110 aa)) folds into the Bromo 2 domain. Positions 435–460 (TDSDLEEDNYSSSYSSDDEYDDEDIN) are disordered. The span at 450-460 (SDDEYDDEDIN) shows a compositional bias: acidic residues. Positions 468-537 (AIQYLEQKLK…INELSDLEMN (70 aa)) form a coiled coil. One can recognise an NET domain in the interval 506-590 (TLLRRKAMKH…EKKNNNNSKR (85 aa)). Positions 586–638 (NNSKRKLSGNYSTAPTNKKKKTLKFLEKDEIINNNNYSDSEEDSSDSSDSDSD) are disordered. Over residues 624 to 638 (DSEEDSSDSSDSDSD) the composition is skewed to acidic residues.

The protein belongs to the BET family. In terms of assembly, interacts with the TFIID subunit TAF7 and with histone H4. In terms of processing, phosphorylated by the casein kinase CK2 complex.

The protein resides in the cytoplasm. Its subcellular location is the nucleus. Functionally, transcription factor involved in the expression of a broad class of genes including snRNAs. Required for sporulation and DNA-damage repair. Prevents the spreading of SIR silencing at telomeres and protects histone H4, but not H3, from deacetylation. This is Bromodomain-containing factor 2 (BDF2) from Saccharomyces cerevisiae (strain ATCC 204508 / S288c) (Baker's yeast).